The following is a 609-amino-acid chain: WD repeat-containing protein 1 (609 aa).

13 WD repeats span residues 6-47, 50-89, 95-137, 140-178, 182-220, 226-265, 272-308, 313-353, 360-410, 434-476, 482-520, 525-563, and 568-606; these read EIKK…IRNI, PAIADIYTEHAHQVVVAKYAPSGFYIASGDVSGKLRIWDT, LLKY…LWDS, SVGEITGHNKVINSVDIKQTRPYRLATGSDDNCAAFFEG, KFKFTLSDHTRFVNCVRFSPDGNRFATASADGQIFIYDG, VCALGGGKAHDGGIYAISWSPDSSQLLSASGDKTAKIWDV, STFNMGSNVLDQQLGCLWQKDHLLSLSLSGYINYLDK, KPLR…YWDS, GFSG…KMDV, MKDK…LYSI, KSDDKTLEAKGPVTDLAYSHDGAFLAVCDANKVVTVFSV, VEHNVFYGHHAKVVCIAWSPDNEHFASGGMDMMVYVWTV, and TRIKIPDAHRLHHVSGLAWLDEHTLVTTSHDASVKEWSI.

Belongs to the WD repeat AIP1 family.

The protein resides in the cytoplasm. The protein localises to the cytoskeleton. Functionally, induces disassembly of actin filaments in conjunction with ADF/cofilin family proteins. Enhances cofilin-mediated actin severing. The protein is WD repeat-containing protein 1 (WDR1) of Gallus gallus (Chicken).